A 1878-amino-acid chain; its full sequence is DNA polymerase (1878 aa).

Disordered stretches follow at residues 691 to 727 (LFQADDDDDDDDEDEDDGLLDERQQDSAEDMKKKGPN) and 1839 to 1878 (TQDDVVKKKRAPKRAAIDRKSGSGGKKSKITAGKTAGTMF). Acidic residues predominate over residues 694-709 (ADDDDDDDDEDEDDGL). Over residues 710–723 (LDERQQDSAEDMKK) the composition is skewed to basic and acidic residues. The segment covering 1868–1878 (ITAGKTAGTMF) has biased composition (low complexity).

This sequence belongs to the DNA polymerase type-B family.

The catalysed reaction is DNA(n) + a 2'-deoxyribonucleoside 5'-triphosphate = DNA(n+1) + diphosphate. The sequence is that of DNA polymerase from Magallana gigas (Pacific oyster).